The primary structure comprises 191 residues: Thymidine kinase (191 aa).

ATP is bound by residues 9–16 and 85–88; these read GSMNSGKT and DESQ. Residue E86 is the Proton acceptor of the active site. The Zn(2+) site is built by C143, C146, C181, and C184.

This sequence belongs to the thymidine kinase family. As to quaternary structure, homotetramer.

It localises to the cytoplasm. The enzyme catalyses thymidine + ATP = dTMP + ADP + H(+). This Listeria innocua serovar 6a (strain ATCC BAA-680 / CLIP 11262) protein is Thymidine kinase.